Reading from the N-terminus, the 38-residue chain is Large ribosomal subunit protein bL36 (38 aa).

Belongs to the bacterial ribosomal protein bL36 family.

This Chloroflexus aurantiacus (strain ATCC 29366 / DSM 635 / J-10-fl) protein is Large ribosomal subunit protein bL36.